The sequence spans 74 residues: Conotoxin Vc6.8 (74 aa).

A signal peptide spans 1-19 (MEKLTILLLVAAVLMSTQA). Positions 20–34 (LMQEQRQKAKINLFS) are excised as a propeptide. 3 disulfides stabilise this stretch: cysteine 49-cysteine 62, cysteine 55-cysteine 66, and cysteine 61-cysteine 70.

This sequence belongs to the conotoxin O2 superfamily. In terms of tissue distribution, expressed by the venom duct.

The protein resides in the secreted. Inhibits voltage-gated ion channels. This chain is Conotoxin Vc6.8, found in Conus victoriae (Queen Victoria cone).